Consider the following 162-residue polypeptide: Probable chemoreceptor glutamine deamidase CheD (162 aa).

Belongs to the CheD family.

It catalyses the reaction L-glutaminyl-[protein] + H2O = L-glutamyl-[protein] + NH4(+). Its function is as follows. Probably deamidates glutamine residues to glutamate on methyl-accepting chemotaxis receptors (MCPs), playing an important role in chemotaxis. The chain is Probable chemoreceptor glutamine deamidase CheD from Clostridium novyi (strain NT).